A 155-amino-acid polypeptide reads, in one-letter code: Regulatory protein RecX (155 aa).

This sequence belongs to the RecX family.

The protein localises to the cytoplasm. Functionally, modulates RecA activity. The protein is Regulatory protein RecX of Vibrio campbellii (strain ATCC BAA-1116).